Here is a 371-residue protein sequence, read N- to C-terminus: Putative F-box/kelch-repeat protein At3g10510 (371 aa).

One can recognise an F-box domain in the interval 13-61 (SVMTSIPDDVIMECIAPRVPRYNHSMLSLVSKQFRSLVASPRLYKTRSL). Kelch repeat units lie at residues 123 to 165 (NIFV…DMPV), 178 to 229 (KIYI…GPSS), and 257 to 305 (NECV…YIVS).

This is Putative F-box/kelch-repeat protein At3g10510 from Arabidopsis thaliana (Mouse-ear cress).